Here is a 425-residue protein sequence, read N- to C-terminus: Phosphomethylpyrimidine synthase (425 aa).

Substrate contacts are provided by residues asparagine 66, methionine 95, tyrosine 124, histidine 159, 181–183 (SRG), 222–225 (DAYR), and glutamate 261. Histidine 265 serves as a coordination point for Zn(2+). A substrate-binding site is contributed by tyrosine 288. Histidine 329 contacts Zn(2+). [4Fe-4S] cluster is bound by residues cysteine 406, cysteine 409, and cysteine 413.

It belongs to the ThiC family. Requires [4Fe-4S] cluster as cofactor.

The catalysed reaction is 5-amino-1-(5-phospho-beta-D-ribosyl)imidazole + S-adenosyl-L-methionine = 4-amino-2-methyl-5-(phosphooxymethyl)pyrimidine + CO + 5'-deoxyadenosine + formate + L-methionine + 3 H(+). The protein operates within cofactor biosynthesis; thiamine diphosphate biosynthesis. Catalyzes the synthesis of the hydroxymethylpyrimidine phosphate (HMP-P) moiety of thiamine from aminoimidazole ribotide (AIR) in a radical S-adenosyl-L-methionine (SAM)-dependent reaction. The protein is Phosphomethylpyrimidine synthase of Archaeoglobus fulgidus (strain ATCC 49558 / DSM 4304 / JCM 9628 / NBRC 100126 / VC-16).